The following is a 1172-amino-acid chain: MALQNKEEEKKKVKKLQKSYFDVLGICCTSEVPIIENILKSLDGVKEYSVIVPSRTVIVVHDSLLISPFQIAKALNEARLEANVRVNGETSFKNKWPSPFAVVSGLLLLLSFLKFVYSPLRWLAVAAVAAGIYPILAKAFASIKRPRIDINILVIITVIATLAMQDFMEAAAVVFLFTISDWLETRASYKATSVMQSLMSLAPQKAIIAETGEEVEVDEVKVDTVVAVKAGETIPIDGIVVDGNCEVDEKTLTGEAFPVPKQRDSTVWAGTINLNGYICVKTTSLAGDCVVAKMAKLVEEAQSSKTKSQRLIDKCSQYYTPAIILVSACVAIVPVIMKVHNLKHWFHLALVVLVSGCPCGLILSTPVATFCALTKAATSGLLIKSADYLDTLSKIKIVAFDKTGTITRGEFIVIDFKSLSRDINLRSLLYWVSSVESKSSHPMAATIVDYAKSVSVEPRPEEVEDYQNFPGEGIYGKIDGNDIFIGNKKIASRAGCSTVPEIEVDTKGGKTVGYVYVGERLAGFFNLSDACRSGVSQAMAELKSLGIKTAMLTGDNQAAAMHAQEQLGNVLDVVHGDLLPEDKSRIIQEFKKEGPTAMVGDGVNDAPALATADIGISMGISGSALATQTGNIILMSNDIRRIPQAVKLARRARRKVVENVCLSIILKAGILALAFAGHPLIWAAVLVDVGTCLLVIFNSMLLLREKKKIGNKKCYRASTSKLNGRKLEGDDDYVVDLEAGLLTKSGNGQCKSSCCGDKKNQENVVMMKPSSKTSSDHSHPGCCGDKKEEKVKPLVKDGCCSEKTRKSEGDMVSLSSCKKSSHVKHDLKMKGGSGCCASKNEKGKEVVAKSCCEKPKQQVESVGDCKSGHCEKKKQAEDIVVPVQIIGHALTHVEIELQTKETCKTSCCDSKEKVKETGLLLSSENTPYLEKGVLIKDEGNCKSGSENMGTVKQSCHEKGCSDEKQTGEITLASEEETDDQDCSSGCCVNEGTVKQSFDEKKHSVLVEKEGLDMETGFCCDAKLVCCGNTEGEVKEQCRLEIKKEEHCKSGCCGEEIQTGEITLVSEEETESTNCSTGCCVDKEEVTQTCHEKPASLVVSGLEVKKDEHCESSHRAVKVETCCKVKIPEACASKCRDRAKRHSGKSCCRSYAKELCSHRHHHHHHHHHHHVSA.

Topologically, residues 1-93 (MALQNKEEEK…VRVNGETSFK (93 aa)) are cytoplasmic. The HMA domain occupies 17–83 (QKSYFDVLGI…ALNEARLEAN (67 aa)). A helical transmembrane segment spans residues 94 to 115 (NKWPSPFAVVSGLLLLLSFLKF). At 116–118 (VYS) the chain is on the extracellular side. A helical membrane pass occupies residues 119–138 (PLRWLAVAAVAAGIYPILAK). At 139 to 145 (AFASIKR) the chain is on the cytoplasmic side. Residues 146–166 (PRIDINILVIITVIATLAMQD) form a helical membrane-spanning segment. Position 167 (Phe-167) is a topological domain, extracellular. The helical transmembrane segment at 168 to 188 (MEAAAVVFLFTISDWLETRAS) threads the bilayer. At 189–314 (YKATSVMQSL…KTKSQRLIDK (126 aa)) the chain is on the cytoplasmic side. The helical transmembrane segment at 315 to 337 (CSQYYTPAIILVSACVAIVPVIM) threads the bilayer. Residues 338 to 345 (KVHNLKHW) lie on the Extracellular side of the membrane. Residues 346–363 (FHLALVVLVSGCPCGLIL) form a helical membrane-spanning segment. Residues 364 to 656 (STPVATFCAL…KLARRARRKV (293 aa)) lie on the Cytoplasmic side of the membrane. Asp-401 acts as the 4-aspartylphosphate intermediate in catalysis. Asp-601 and Asp-605 together coordinate Mg(2+). Residues 657–676 (VENVCLSIILKAGILALAFA) traverse the membrane as a helical segment. At 677–680 (GHPL) the chain is on the extracellular side. The helical transmembrane segment at 681–700 (IWAAVLVDVGTCLLVIFNSM) threads the bilayer. Topologically, residues 701–1172 (LLLREKKKIG…HHHHHHHVSA (472 aa)) are cytoplasmic.

It belongs to the cation transport ATPase (P-type) (TC 3.A.3) family. Type IB subfamily.

It localises to the membrane. It carries out the reaction Zn(2+)(in) + ATP + H2O = Zn(2+)(out) + ADP + phosphate + H(+). It catalyses the reaction Cd(2+)(in) + ATP + H2O = Cd(2+)(out) + ADP + phosphate + H(+). In terms of biological role, involved in cadmium/zinc transport. This is Putative cadmium/zinc-transporting ATPase HMA4 (HMA4) from Arabidopsis thaliana (Mouse-ear cress).